Here is a 406-residue protein sequence, read N- to C-terminus: 3-oxoacyl-[acyl-carrier-protein] synthase 1 (406 aa).

The Ketosynthase family 3 (KS3) domain maps to 1-405 (MRRVVITGIG…GTNVSLIVKK (405 aa)). Residues cysteine 164, histidine 299, and histidine 335 each act as for beta-ketoacyl synthase activity in the active site.

This sequence belongs to the thiolase-like superfamily. Beta-ketoacyl-ACP synthases family. As to quaternary structure, homodimer.

It is found in the cytoplasm. The catalysed reaction is a fatty acyl-[ACP] + malonyl-[ACP] + H(+) = a 3-oxoacyl-[ACP] + holo-[ACP] + CO2. It catalyses the reaction (3Z)-decenoyl-[ACP] + malonyl-[ACP] + H(+) = 3-oxo-(5Z)-dodecenoyl-[ACP] + holo-[ACP] + CO2. Its pathway is lipid metabolism; fatty acid biosynthesis. In terms of biological role, involved in the type II fatty acid elongation cycle. Catalyzes the elongation of a wide range of acyl-ACP by the addition of two carbons from malonyl-ACP to an acyl acceptor. Can also use unsaturated fatty acids. Catalyzes a key reaction in unsaturated fatty acid (UFA) synthesis, the elongation of the cis-3-decenoyl-ACP produced by FabA. This chain is 3-oxoacyl-[acyl-carrier-protein] synthase 1 (fabB), found in Buchnera aphidicola subsp. Acyrthosiphon pisum (strain APS) (Acyrthosiphon pisum symbiotic bacterium).